Here is a 326-residue protein sequence, read N- to C-terminus: Protein LEG1 homolog (326 aa).

Residues 1–22 form the signal peptide; it reads MKSNKTIFLILLFLINFNSIYS. N-linked (GlcNAc...) asparagine glycans are attached at residues Asn58, Asn85, Asn165, Asn226, and Asn245.

This sequence belongs to the LEG1 family.

The protein resides in the secreted. The sequence is that of Protein LEG1 homolog from Dictyostelium discoideum (Social amoeba).